Here is a 660-residue protein sequence, read N- to C-terminus: Cullin-associated NEDD8-dissociated protein 1 homolog (660 aa).

K16 participates in a covalent cross-link: Glycyl lysine isopeptide (Lys-Gly) (interchain with G-Cter in NEDD8). Residues 339–364 (TQNENDHGSDNLIDSDDGFGSDNDPE) are disordered. Over residues 351-363 (IDSDDGFGSDNDP) the composition is skewed to acidic residues.

As to quaternary structure, interacts with unneddylated cullin CDC53. Neddylated at Lys-16.

Assembly factor of SCF (SKP1-CUL1-F-box protein) E3 ubiquitin ligase complexes that promotes the exchange of the substrate-recognition F-box subunit in SCF complexes, thereby playing a key role in the cellular repertoire of SCF complexes. Acts as a F-box protein exchange factor. Involved in the aging process. Longevity-assurance protein. In Saccharomyces cerevisiae (strain ATCC 204508 / S288c) (Baker's yeast), this protein is Cullin-associated NEDD8-dissociated protein 1 homolog (LAG2).